The sequence spans 279 residues: Probable endonuclease 4 (279 aa).

Residues H66, H106, E142, D175, H178, H212, D225, H227, and E257 each coordinate Zn(2+).

Belongs to the AP endonuclease 2 family. The cofactor is Zn(2+).

It carries out the reaction Endonucleolytic cleavage to 5'-phosphooligonucleotide end-products.. Functionally, endonuclease IV plays a role in DNA repair. It cleaves phosphodiester bonds at apurinic or apyrimidinic (AP) sites, generating a 3'-hydroxyl group and a 5'-terminal sugar phosphate. The polypeptide is Probable endonuclease 4 (Moorella thermoacetica (strain ATCC 39073 / JCM 9320)).